Consider the following 130-residue polypeptide: Large ribosomal subunit protein bL17 (130 aa).

Belongs to the bacterial ribosomal protein bL17 family. As to quaternary structure, part of the 50S ribosomal subunit. Contacts protein L32.

This Nitrosomonas eutropha (strain DSM 101675 / C91 / Nm57) protein is Large ribosomal subunit protein bL17.